Here is a 197-residue protein sequence, read N- to C-terminus: uncharacterized protein (197 aa).

A signal peptide spans 1-19; sequence MKLASLLVGSLMLAVPALA.

It is found in the secreted. This is an uncharacterized protein from Arthroderma benhamiae (strain ATCC MYA-4681 / CBS 112371) (Trichophyton mentagrophytes).